Reading from the N-terminus, the 351-residue chain is Leukotriene B4 receptor 1 (351 aa).

Over 1-21 (MAANTTSPAAPSSPGGMSLSL) the chain is Extracellular. An N-linked (GlcNAc...) asparagine glycan is attached at Asn-4. The helical transmembrane segment at 22 to 44 (LPIVLLSVALAVGLPGNSFVVWS) threads the bilayer. Over 45–56 (ILKRMQKRTVTA) the chain is Cytoplasmic. The helical transmembrane segment at 57 to 77 (LLVLNLALADLAVLLTAPFFL) threads the bilayer. Topologically, residues 78-93 (HFLARGTWSFREMGCR) are extracellular. Residues 94 to 115 (LCHYVCGISMYASVLLITIMSL) traverse the membrane as a helical segment. Residues 116–140 (DRSLAVARPFMSQKVRTKAFARWVL) are Cytoplasmic-facing. Residues 141 to 161 (AGIWVVSFLLAIPVLVYRTVK) form a helical membrane-spanning segment. At 162 to 179 (WNNRTLICAPNYPNKEHK) the chain is on the extracellular side. An N-linked (GlcNAc...) asparagine glycan is attached at Asn-164. A helical transmembrane segment spans residues 180-200 (VFHLLFEAITGFLLPFLAVVA). Topologically, residues 201-222 (SYSDIGRRLQARRFRRSRRTGR) are cytoplasmic. A helical transmembrane segment spans residues 223-243 (LVVLIILAFAAFWLPYHLVNL). Topologically, residues 244 to 268 (VEAGRTVAGWDKNSPAGQRLRLARY) are extracellular. A helical membrane pass occupies residues 269 to 289 (VLIALAFLSSSVNPVLYACAG). Residues 290-351 (GGLLRSAGVG…TSSTIPESSK (62 aa)) lie on the Cytoplasmic side of the membrane. 2 stretches are compositionally biased toward polar residues: residues 311-326 (EVSS…QTPK) and 339-351 (SFMT…ESSK). The interval 311 to 351 (EVSSTRRGGTLVQTPKDTPACPEPGPTDSFMTSSTIPESSK) is disordered.

Belongs to the G-protein coupled receptor 1 family. Phosphorylated by GRK6 upon leukotriene B4 binding; which promotes desensitization. Highly expressed on activated leukocytes, including eosinophils.

It localises to the cell membrane. Functionally, receptor for leukotriene B4, a potent chemoattractant involved in inflammation and immune response. In Mus musculus (Mouse), this protein is Leukotriene B4 receptor 1 (Ltb4r).